The sequence spans 241 residues: Uracil-DNA glycosylase (241 aa).

The active-site Proton acceptor is the D68.

This sequence belongs to the uracil-DNA glycosylase (UDG) superfamily. UNG family.

The protein resides in the cytoplasm. The catalysed reaction is Hydrolyzes single-stranded DNA or mismatched double-stranded DNA and polynucleotides, releasing free uracil.. Its function is as follows. Excises uracil residues from the DNA which can arise as a result of misincorporation of dUMP residues by DNA polymerase or due to deamination of cytosine. In Rhizobium meliloti (strain 1021) (Ensifer meliloti), this protein is Uracil-DNA glycosylase.